Reading from the N-terminus, the 488-residue chain is Bifunctional protein HldE (488 aa).

Positions 1–331 are ribokinase; sequence MTELSALVER…VALHREDLTL (331 aa). Residue 206-209 coordinates ATP; the sequence is NRKE. Asp276 is an active-site residue. Residues 358–488 are cytidylyltransferase; the sequence is FTNGCFDLLH…TNTIKKMNGN (131 aa).

The protein in the N-terminal section; belongs to the carbohydrate kinase PfkB family. It in the C-terminal section; belongs to the cytidylyltransferase family. As to quaternary structure, homodimer.

The catalysed reaction is D-glycero-beta-D-manno-heptose 7-phosphate + ATP = D-glycero-beta-D-manno-heptose 1,7-bisphosphate + ADP + H(+). It catalyses the reaction D-glycero-beta-D-manno-heptose 1-phosphate + ATP + H(+) = ADP-D-glycero-beta-D-manno-heptose + diphosphate. The protein operates within nucleotide-sugar biosynthesis; ADP-L-glycero-beta-D-manno-heptose biosynthesis; ADP-L-glycero-beta-D-manno-heptose from D-glycero-beta-D-manno-heptose 7-phosphate: step 1/4. It functions in the pathway nucleotide-sugar biosynthesis; ADP-L-glycero-beta-D-manno-heptose biosynthesis; ADP-L-glycero-beta-D-manno-heptose from D-glycero-beta-D-manno-heptose 7-phosphate: step 3/4. In terms of biological role, catalyzes the phosphorylation of D-glycero-D-manno-heptose 7-phosphate at the C-1 position to selectively form D-glycero-beta-D-manno-heptose-1,7-bisphosphate. Its function is as follows. Catalyzes the ADP transfer from ATP to D-glycero-beta-D-manno-heptose 1-phosphate, yielding ADP-D-glycero-beta-D-manno-heptose. In Paramagnetospirillum magneticum (strain ATCC 700264 / AMB-1) (Magnetospirillum magneticum), this protein is Bifunctional protein HldE.